The chain runs to 377 residues: Chaperone protein DnaJ (377 aa).

The 66-residue stretch at 5 to 70 folds into the J domain; that stretch reads DYYEILGVSR…QKRAAYDQYG (66 aa). Residues 132 to 210 form a CR-type zinc finger; sequence GVTKEIRIPT…CHGHGRIEKS (79 aa). 8 residues coordinate Zn(2+): Cys-145, Cys-148, Cys-162, Cys-165, Cys-184, Cys-187, Cys-198, and Cys-201. CXXCXGXG motif repeat units follow at residues 145 to 152, 162 to 169, 184 to 191, and 198 to 205; these read CDVCHGSG, CPTCHGAG, CPHCHGRG, and CNKCHGHG.

This sequence belongs to the DnaJ family. Homodimer. The cofactor is Zn(2+).

Its subcellular location is the cytoplasm. Functionally, participates actively in the response to hyperosmotic and heat shock by preventing the aggregation of stress-denatured proteins and by disaggregating proteins, also in an autonomous, DnaK-independent fashion. Unfolded proteins bind initially to DnaJ; upon interaction with the DnaJ-bound protein, DnaK hydrolyzes its bound ATP, resulting in the formation of a stable complex. GrpE releases ADP from DnaK; ATP binding to DnaK triggers the release of the substrate protein, thus completing the reaction cycle. Several rounds of ATP-dependent interactions between DnaJ, DnaK and GrpE are required for fully efficient folding. Also involved, together with DnaK and GrpE, in the DNA replication of plasmids through activation of initiation proteins. The protein is Chaperone protein DnaJ of Edwardsiella ictaluri (strain 93-146).